Consider the following 189-residue polypeptide: UPF0301 protein RPR_01165 (189 aa).

This sequence belongs to the UPF0301 (AlgH) family.

This Rickettsia peacockii (strain Rustic) protein is UPF0301 protein RPR_01165.